The following is a 141-amino-acid chain: ATP synthase epsilon chain (141 aa).

It belongs to the ATPase epsilon chain family. In terms of assembly, F-type ATPases have 2 components, CF(1) - the catalytic core - and CF(0) - the membrane proton channel. CF(1) has five subunits: alpha(3), beta(3), gamma(1), delta(1), epsilon(1). CF(0) has three main subunits: a, b and c.

The protein localises to the cell inner membrane. Functionally, produces ATP from ADP in the presence of a proton gradient across the membrane. This is ATP synthase epsilon chain from Paraburkholderia phymatum (strain DSM 17167 / CIP 108236 / LMG 21445 / STM815) (Burkholderia phymatum).